The following is a 469-amino-acid chain: Probable monogalactosyldiacylglycerol synthase 2, chloroplastic (469 aa).

Residues 1–42 constitute a chloroplast transit peptide; it reads MVISVATPRRSIRDAVLGGVLGAGGRQLYQPLRCAFYDGAAG.

The protein belongs to the glycosyltransferase 28 family.

The protein resides in the plastid. It is found in the chloroplast membrane. It carries out the reaction a 1,2-diacyl-sn-glycerol + UDP-alpha-D-galactose = a 1,2-diacyl-3-O-(beta-D-galactosyl)-sn-glycerol + UDP + H(+). Functionally, involved in the synthesis of the major structural component of photosynthetic membranes. In Oryza sativa subsp. indica (Rice), this protein is Probable monogalactosyldiacylglycerol synthase 2, chloroplastic (MGD2).